Consider the following 234-residue polypeptide: Ubiquitin thioesterase OTUB2 (234 aa).

In terms of domain architecture, OTU spans 40–231 (TAIRKTKGDG…TSHYNILYAA (192 aa)). Aspartate 48 is a catalytic residue. The active-site Nucleophile is the cysteine 51. Histidine 224 is an active-site residue.

This sequence belongs to the peptidase C65 family. In terms of tissue distribution, widely expressed. Expressed at higher level in brain.

The enzyme catalyses Thiol-dependent hydrolysis of ester, thioester, amide, peptide and isopeptide bonds formed by the C-terminal Gly of ubiquitin (a 76-residue protein attached to proteins as an intracellular targeting signal).. Functionally, hydrolase that can remove conjugated ubiquitin from proteins in vitro and may therefore play an important regulatory role at the level of protein turnover by preventing degradation. Mediates deubiquitination of 'Lys-11'-,'Lys-48'- and 'Lys-63'-linked polyubiquitin chains, with a preference for 'Lys-63'-linked polyubiquitin chains. The chain is Ubiquitin thioesterase OTUB2 (OTUB2) from Homo sapiens (Human).